A 358-amino-acid polypeptide reads, in one-letter code: uncharacterized protein (358 aa).

The protein belongs to the SMP-30/CGR1 family.

This is an uncharacterized protein from Saccharomyces cerevisiae (strain ATCC 204508 / S288c) (Baker's yeast).